A 101-amino-acid chain; its full sequence is NADH-quinone oxidoreductase subunit K (101 aa).

3 helical membrane passes run 5–25, 30–50, and 62–82; these read PNWY…GVLF, IVVL…LVTF, and LVFF…AIVI.

This sequence belongs to the complex I subunit 4L family. NDH-1 is composed of 14 different subunits. Subunits NuoA, H, J, K, L, M, N constitute the membrane sector of the complex.

It is found in the cell inner membrane. The enzyme catalyses a quinone + NADH + 5 H(+)(in) = a quinol + NAD(+) + 4 H(+)(out). Its function is as follows. NDH-1 shuttles electrons from NADH, via FMN and iron-sulfur (Fe-S) centers, to quinones in the respiratory chain. The immediate electron acceptor for the enzyme in this species is believed to be a menaquinone. Couples the redox reaction to proton translocation (for every two electrons transferred, four hydrogen ions are translocated across the cytoplasmic membrane), and thus conserves the redox energy in a proton gradient. The polypeptide is NADH-quinone oxidoreductase subunit K (Salinibacter ruber (strain DSM 13855 / M31)).